A 427-amino-acid polypeptide reads, in one-letter code: Histidinol dehydrogenase (427 aa).

The NAD(+) site is built by Tyr-127, Gln-187, and Asn-210. The substrate site is built by Ser-233, Gln-255, and His-258. The Zn(2+) site is built by Gln-255 and His-258. Residues Glu-323 and His-324 each act as proton acceptor in the active site. His-324, Asp-357, Glu-411, and His-416 together coordinate substrate. Position 357 (Asp-357) interacts with Zn(2+). Residue His-416 participates in Zn(2+) binding.

It belongs to the histidinol dehydrogenase family. Zn(2+) is required as a cofactor.

The catalysed reaction is L-histidinol + 2 NAD(+) + H2O = L-histidine + 2 NADH + 3 H(+). Its pathway is amino-acid biosynthesis; L-histidine biosynthesis; L-histidine from 5-phospho-alpha-D-ribose 1-diphosphate: step 9/9. Catalyzes the sequential NAD-dependent oxidations of L-histidinol to L-histidinaldehyde and then to L-histidine. The protein is Histidinol dehydrogenase of Streptococcus mutans serotype c (strain ATCC 700610 / UA159).